The following is a 956-amino-acid chain: uncharacterized protein (956 aa).

The 102-residue stretch at 40–141 (PATKVSIDKI…IYCMTKAREA (102 aa)) folds into the Fibronectin type-III domain. Disordered stretches follow at residues 152–173 (RNTI…PAPL) and 488–600 (NNGD…SYSH). Polar residues-rich tracts occupy residues 153 to 165 (NTIT…QPRN) and 488 to 523 (NNGD…SRTG). Phosphothreonine is present on threonine 154. Residues serine 501 and serine 520 each carry the phosphoserine modification. The span at 524–543 (SIDLISNNNKSINNSNADSA) shows a compositional bias: low complexity. The span at 552–563 (VSYSPSNEPIQP) shows a compositional bias: polar residues. The span at 564 to 574 (SSSLLSQLTQD) shows a compositional bias: low complexity. A compositionally biased stretch (polar residues) spans 578–599 (RSMLSNHISSNNENKQQPSSYS). Residues serine 802, serine 842, and serine 895 each carry the phosphoserine modification. The tract at residues 875–956 (VGPKVPAKEP…NLFNPHSHDS (82 aa)) is disordered. Over residues 895 to 904 (SNSSISSAWS) the composition is skewed to low complexity.

This is an uncharacterized protein from Saccharomyces cerevisiae (strain ATCC 204508 / S288c) (Baker's yeast).